A 310-amino-acid polypeptide reads, in one-letter code: ADP-L-glycero-D-manno-heptose-6-epimerase (310 aa).

NADP(+) is bound by residues 10–11 (FI), 31–32 (DN), Lys38, Lys53, 75–79 (EGACS), and Asn92. Tyr140 (proton acceptor) is an active-site residue. Lys144 contacts NADP(+). Substrate is bound at residue Asn169. The NADP(+) site is built by Val170 and Lys178. The active-site Proton acceptor is the Lys178. Residues Ser180, His187, 201–204 (FAGS), Arg209, and Tyr272 each bind substrate.

The protein belongs to the NAD(P)-dependent epimerase/dehydratase family. HldD subfamily. In terms of assembly, homopentamer. NADP(+) is required as a cofactor.

The catalysed reaction is ADP-D-glycero-beta-D-manno-heptose = ADP-L-glycero-beta-D-manno-heptose. It functions in the pathway nucleotide-sugar biosynthesis; ADP-L-glycero-beta-D-manno-heptose biosynthesis; ADP-L-glycero-beta-D-manno-heptose from D-glycero-beta-D-manno-heptose 7-phosphate: step 4/4. Functionally, catalyzes the interconversion between ADP-D-glycero-beta-D-manno-heptose and ADP-L-glycero-beta-D-manno-heptose via an epimerization at carbon 6 of the heptose. The protein is ADP-L-glycero-D-manno-heptose-6-epimerase of Yersinia pseudotuberculosis serotype O:1b (strain IP 31758).